Consider the following 343-residue polypeptide: Stimulator of interferon genes protein homolog (343 aa).

N-linked (GlcNAc...) asparagine glycosylation is present at Asn84. 2 consecutive transmembrane segments (helical) span residues 87 to 107 (IYLI…TGNY) and 109 to 129 (NVMP…WSFT). Asn157 contacts 3',2'-cGAMP. A glycan (N-linked (GlcNAc...) asparagine) is linked at Asn187. A helical transmembrane segment spans residues 195–215 (LVILIPDEMFVNGVLESHLLD). Residues Arg232, Lys235, Glu255, Thr258, and Ser262 each contribute to the 3',2'-cGAMP site. Residues Asn270 and Asn333 are each glycosylated (N-linked (GlcNAc...) asparagine).

The protein belongs to the STING family.

The protein localises to the endoplasmic reticulum membrane. Functionally, facilitator of innate immune signaling that binds cyclic dinucleotides produced in response to infection by bacteria and/or viruses, and promotes the activation of the NF-kappa-B transcription factor Rel (Relish). Recognizes and binds cyclic di-GMP (c-di-GMP), a cyclic dinucleotide messenger produced by bacteria such as L.monocytogenes, leading to activation of the peptidoglycan recognition protein (IMD) signaling pathway and activation of Rel (Relish). Innate immune response is triggered in response to double-stranded RNA from viruses delivered to the cytoplasm: Sting acts by specifically binding cyclic dinucleotides 3',2'-cGAMP and 2',3'-cGAMP produced by cGlr1 and cGlr2 in response to RNA virus in the cytosol. Has a strong preference for 3',2'-cGAMP compared to other cyclic dinucleotides such as 2',3'-cGAMP or 3'3'-c-di-GMP. Upon binding to 3',2'-cGAMP, activates an antiviral immune response, leading to the activation of Rel (Relish). Activated in brain in response to Zika virus infection, leading to autophagy. The chain is Stimulator of interferon genes protein homolog from Drosophila melanogaster (Fruit fly).